Here is a 262-residue protein sequence, read N- to C-terminus: Tropinone reductase homolog At2g30670 (262 aa).

13 to 37 (LVTGGASGIGHAIVEELAGLGARIY) provides a ligand contact to NADP(+). A substrate-binding site is contributed by Ser-146. Residue Tyr-159 is the Proton acceptor of the active site.

The protein belongs to the short-chain dehydrogenases/reductases (SDR) family. SDR65C subfamily.

The chain is Tropinone reductase homolog At2g30670 from Arabidopsis thaliana (Mouse-ear cress).